Reading from the N-terminus, the 892-residue chain is Exo-beta-D-glucosaminidase (892 aa).

An N-terminal signal peptide occupies residues 1–18 (MLANAIAALLLGSGIASA). Residues 19–28 (AGHGSPLTSK) constitute a propeptide that is removed on maturation. Residues N196, N336, and N440 are each glycosylated (N-linked (GlcNAc...) asparagine). The active-site Proton donor is the D464. E539 serves as the catalytic Nucleophile. Residues N557, N578, N689, and N825 are each glycosylated (N-linked (GlcNAc...) asparagine).

The protein belongs to the glycosyl hydrolase 2 family. Monomer.

Its subcellular location is the secreted. The protein resides in the extracellular space. It carries out the reaction Hydrolysis of chitosan or chitosan oligosaccharides to remove successive D-glucosamine residues from the non-reducing termini.. Functionally, hydrolyzes chitosan and chitooligosaccharides with retention of anomeric configuration. Has no activity against beta-D-galactoside, beta-D-glucuronide, beta-D-mannoside, chitin, glycol chitosan, cellulose, N,N'-diacetylchitibiose and pNP-GlcNAc. The polypeptide is Exo-beta-D-glucosaminidase (Hypocrea jecorina (Trichoderma reesei)).